A 60-amino-acid chain; its full sequence is Large ribosomal subunit protein bL32 (60 aa).

Positions Met1–Arg16 are enriched in basic residues. The interval Met1–Ser60 is disordered. Residues Arg17–Leu44 are compositionally biased toward basic and acidic residues.

This sequence belongs to the bacterial ribosomal protein bL32 family.

In Rhodopseudomonas palustris (strain BisA53), this protein is Large ribosomal subunit protein bL32.